Here is a 512-residue protein sequence, read N- to C-terminus: Glycerol kinase, glycosomal (512 aa).

Threonine 11 is a substrate binding site. Arginine 15 contacts ATP. Arginine 84, tyrosine 139, and aspartate 254 together coordinate substrate. ATP is bound by residues threonine 276, glycine 321, and 422 to 426; that span reads GLSKN. A Microbody targeting signal motif is present at residues 510–512; that stretch reads AKL.

The protein belongs to the FGGY kinase family.

It is found in the glycosome. It catalyses the reaction glycerol + ATP = sn-glycerol 3-phosphate + ADP + H(+). It participates in polyol metabolism; glycerol degradation via glycerol kinase pathway; sn-glycerol 3-phosphate from glycerol: step 1/1. Its function is as follows. Catalyzes the phosphorylation of glycerol using ATP. Under anoxic conditions, when glycerol 3-phosphate accumulates in the glycosome, it catalyzes the reverse reaction, maintaining the ATP balance. Key enzyme for the survival of bloodstream forms under anoxic conditions. The protein is Glycerol kinase, glycosomal (GK) of Trypanosoma brucei brucei.